A 519-amino-acid polypeptide reads, in one-letter code: 2,3-bisphosphoglycerate-independent phosphoglycerate mutase (519 aa).

2 residues coordinate Mn(2+): D18 and S68. S68 functions as the Phosphoserine intermediate in the catalytic mechanism. Substrate-binding positions include H129, 159 to 160 (RD), R191, R197, 267 to 270 (RADR), and K341. D408, H412, D449, H450, and H468 together coordinate Mn(2+).

The protein belongs to the BPG-independent phosphoglycerate mutase family. In terms of assembly, monomer. Requires Mn(2+) as cofactor.

The enzyme catalyses (2R)-2-phosphoglycerate = (2R)-3-phosphoglycerate. It participates in carbohydrate degradation; glycolysis; pyruvate from D-glyceraldehyde 3-phosphate: step 3/5. Catalyzes the interconversion of 2-phosphoglycerate and 3-phosphoglycerate. In Coxiella burnetii (strain RSA 493 / Nine Mile phase I), this protein is 2,3-bisphosphoglycerate-independent phosphoglycerate mutase.